The following is a 256-amino-acid chain: MLRIADKTFDSHLFTGTGKFASSQLMVEAIRASGSQLVTLAMKRVDLRQHNDAILAPLIEAGVTLLPNTSGAKTAEEAIFAAQLALEALGTHWLKLEIHPDARWLLPDPIETLKAAEALVKQGFVVLPYCGADPVLCKRLEEVGCAAVMPLGAPIGSNQGLETKAMLEIIIQQATVPVVVDAGIGVPSHAAQALEMGADAVLVNTAIAVADDPVMMATAFRLAVEAGLLARQAVPGNRSTYASATSPLTGFLEALA.

Lys95 serves as the catalytic Schiff-base intermediate with DXP. 1-deoxy-D-xylulose 5-phosphate contacts are provided by residues Gly156, Ala182–Gly183, and Asn204–Thr205.

This sequence belongs to the ThiG family. As to quaternary structure, homotetramer. Forms heterodimers with either ThiH or ThiS.

It is found in the cytoplasm. It carries out the reaction [ThiS sulfur-carrier protein]-C-terminal-Gly-aminoethanethioate + 2-iminoacetate + 1-deoxy-D-xylulose 5-phosphate = [ThiS sulfur-carrier protein]-C-terminal Gly-Gly + 2-[(2R,5Z)-2-carboxy-4-methylthiazol-5(2H)-ylidene]ethyl phosphate + 2 H2O + H(+). It participates in cofactor biosynthesis; thiamine diphosphate biosynthesis. In terms of biological role, catalyzes the rearrangement of 1-deoxy-D-xylulose 5-phosphate (DXP) to produce the thiazole phosphate moiety of thiamine. Sulfur is provided by the thiocarboxylate moiety of the carrier protein ThiS. In vitro, sulfur can be provided by H(2)S. The sequence is that of Thiazole synthase from Salmonella typhi.